A 368-amino-acid chain; its full sequence is F-box protein At3g17710 (368 aa).

In terms of domain architecture, F-box spans 1-46 (MASVKLPWDLEEEILSRLPPRSLVRFRTVCKHWNGLFSDKRFVKKH).

The sequence is that of F-box protein At3g17710 from Arabidopsis thaliana (Mouse-ear cress).